The primary structure comprises 125 residues: Large ribosomal subunit protein uL22c (125 aa).

Belongs to the universal ribosomal protein uL22 family. As to quaternary structure, part of the 50S ribosomal subunit.

It localises to the plastid. The protein localises to the chloroplast. In terms of biological role, this protein binds specifically to 23S rRNA. Functionally, the globular domain of the protein is located near the polypeptide exit tunnel on the outside of the subunit, while an extended beta-hairpin is found that lines the wall of the exit tunnel in the center of the 70S ribosome. In Huperzia lucidula (Shining clubmoss), this protein is Large ribosomal subunit protein uL22c (rpl22).